We begin with the raw amino-acid sequence, 444 residues long: Ribosome biogenesis protein YTM1 (444 aa).

The segment at 8–89 (VKLRFFTREE…ETFLNVEYTR (82 aa)) is ubiquitin-like (UBL) domain. WD repeat units follow at residues 99-138 (SFDNEDWVSSLDVGSNYIYSGSYDGIVRTYNLSGKVEKQY), 140-178 (GHSGPIRAVHYISSTRLVSAGNDRTLRLWKTKNDDLKSI), 194-231 (GHKAPVVSIDVSKDRILSASCDNTVSLWSTNYKEMTVI), 269-309 (SHSA…CVDT), 311-350 (TTSYSLLSVAQLPKLNLLACGSSARHITLHDPRVNSSSKI), 357-397 (GHKN…AMYT), and 408-444 (GVNDKVFAVKWAKGVGIISGGQDKKIQINKGDNIFSN). The tract at residues 99-444 (SFDNEDWVSS…INKGDNIFSN (346 aa)) is sufficient for interaction with ERB1 and association with 66S pre-ribosomes.

The protein belongs to the WD repeat WDR12/YTM1 family. In terms of assembly, component of the NOP7 complex, composed of ERB1, NOP7 and YTM1. The complex is held together by ERB1, which interacts with NOP7 via its N-terminal domain and with YTM1 via a high-affinity interaction between the seven-bladed beta-propeller domains of the 2 proteins. The NOP7 complex associates with the 66S pre-ribosome. Interacts (via UBL domain) with MDN1 (via VWFA/MIDAS domain).

It is found in the nucleus. Its subcellular location is the nucleolus. The protein localises to the nucleoplasm. Its function is as follows. Component of the NOP7 complex, which is required for maturation of the 25S and 5.8S ribosomal RNAs and formation of the 60S ribosome. In Kluyveromyces lactis (strain ATCC 8585 / CBS 2359 / DSM 70799 / NBRC 1267 / NRRL Y-1140 / WM37) (Yeast), this protein is Ribosome biogenesis protein YTM1.